The chain runs to 254 residues: TLC domain-containing protein At5g14285 (254 aa).

Helical transmembrane passes span D12–F32, S45–F65, T82–F101, F124–S144, L172–F192, and W211–I231. The region spanning Q38–R248 is the TLC domain.

The protein localises to the membrane. The sequence is that of TLC domain-containing protein At5g14285 from Arabidopsis thaliana (Mouse-ear cress).